The sequence spans 176 residues: NAD(P)H-quinone oxidoreductase subunit 6, chloroplastic (176 aa).

The next 5 membrane-spanning stretches (helical) occupy residues 10–30, 32–52, 61–81, 92–112, and 152–172; these read FLLV…VLLA, PIYS…FYIL, AQLL…VMFI, LWTV…VSLI, and FFIP…GAIA.

This sequence belongs to the complex I subunit 6 family. In terms of assembly, NDH is composed of at least 16 different subunits, 5 of which are encoded in the nucleus.

The protein localises to the plastid. It localises to the chloroplast thylakoid membrane. The enzyme catalyses a plastoquinone + NADH + (n+1) H(+)(in) = a plastoquinol + NAD(+) + n H(+)(out). It carries out the reaction a plastoquinone + NADPH + (n+1) H(+)(in) = a plastoquinol + NADP(+) + n H(+)(out). In terms of biological role, NDH shuttles electrons from NAD(P)H:plastoquinone, via FMN and iron-sulfur (Fe-S) centers, to quinones in the photosynthetic chain and possibly in a chloroplast respiratory chain. The immediate electron acceptor for the enzyme in this species is believed to be plastoquinone. Couples the redox reaction to proton translocation, and thus conserves the redox energy in a proton gradient. The protein is NAD(P)H-quinone oxidoreductase subunit 6, chloroplastic (ndhG) of Helianthus annuus (Common sunflower).